Consider the following 262-residue polypeptide: Iso-A82775C biosynthesis cluster protein B (262 aa).

Part of the gene cluster that mediates the biosynthesis of iso-A82775C, a enylepoxycyclohexane and biosynthetic precursor of the chloropestolide anticancer natural products. Within the cluster, the prenyltransferase iacE prenylates siccayne to generate pestalodiol E, using dimethylallyl diphosphate (DMAPP) as cosubstrate. The probable oxidoreductase iacF is then involved in the epoxidation of pestalodiol F to pestalodiol F, which is further converted to pestalofone A by the short-chain dehydrogenase/reductase iacG. Iso-A82775C is subsequently generated from pestalofone A by the short-chain dehydrogenase/reductase iacC. Iso-A82775C is further condensed with maldoxin via a Diels-Alder reaction to produce the anticancer natural products chloropestolides A to E. The chain is Iso-A82775C biosynthesis cluster protein B from Pestalotiopsis fici (strain W106-1 / CGMCC3.15140).